Reading from the N-terminus, the 395-residue chain is NKAP-like protein (395 aa).

2 disordered regions span residues Met1–Pro77 and Cys91–Lys247. Residues Ser23 and Ser25 each carry the phosphoserine modification. The span at Ser25 to Ser35 shows a compositional bias: polar residues. Residues Asp109–Gly130 are compositionally biased toward basic and acidic residues. At Ser149 the chain carries Phosphoserine. Basic and acidic residues predominate over residues Asp150–Asn161. 2 stretches are compositionally biased toward basic residues: residues Lys177–Lys197 and Lys214–Lys238.

The protein belongs to the NKAP family. Interacts with RBPJ, CIR1 and HDAC3. As to expression, specific to testis (at protein level). Detected in differenting spermatogonia and early spermatocytes (at protein level).

It is found in the nucleus. Transcriptional repressor of Notch-mediated signaling. Required for spermatogenesis. The sequence is that of NKAP-like protein from Mus musculus (Mouse).